A 79-amino-acid polypeptide reads, in one-letter code: DNA-directed RNA polymerase subunit omega (79 aa).

The protein belongs to the RNA polymerase subunit omega family. In terms of assembly, the RNAP catalytic core consists of 2 alpha, 1 beta, 1 beta' and 1 omega subunit. When a sigma factor is associated with the core the holoenzyme is formed, which can initiate transcription.

It catalyses the reaction RNA(n) + a ribonucleoside 5'-triphosphate = RNA(n+1) + diphosphate. Its function is as follows. Promotes RNA polymerase assembly. Latches the N- and C-terminal regions of the beta' subunit thereby facilitating its interaction with the beta and alpha subunits. The chain is DNA-directed RNA polymerase subunit omega from Thermotoga neapolitana (strain ATCC 49049 / DSM 4359 / NBRC 107923 / NS-E).